The following is a 283-amino-acid chain: Nopaline-binding periplasmic protein (283 aa).

An N-terminal signal peptide occupies residues 1–25 (MKFFNLNALAAVVTGVLLAAGPTQA). Residues cysteine 63 and cysteine 70 are joined by a disulfide bond.

This sequence belongs to the bacterial solute-binding protein 3 family.

The protein localises to the periplasm. Functionally, component of the nopaline active transport system probably consisting of four subunits: Q, M, P and T. This system is also capable of transporting octopine provided that catabolic functions are induced with nopaline. The protein is Nopaline-binding periplasmic protein (nocT) of Agrobacterium fabrum (strain C58 / ATCC 33970) (Agrobacterium tumefaciens (strain C58)).